We begin with the raw amino-acid sequence, 402 residues long: 26S proteasome regulatory subunit 8 (402 aa).

186-193 (GPPGTGKT) is a binding site for ATP.

Belongs to the AAA ATPase family.

The protein localises to the cytoplasm. The protein resides in the nucleus. Functionally, the 26S proteasome is involved in the ATP-dependent degradation of ubiquitinated proteins. The regulatory (or ATPase) complex confers ATP dependency and substrate specificity to the 26S complex. The protein is 26S proteasome regulatory subunit 8 of Manduca sexta (Tobacco hawkmoth).